The following is a 513-amino-acid chain: uncharacterized protein (513 aa).

A run of 5 helical transmembrane segments spans residues 262 to 282 (FAIFTDNTPFVLTGPITFWQL), 304 to 324 (YMFLFVALYLPAIYVAVITYH), 341 to 361 (EPIPFPAIIEALIMEISFEAL), 382 to 402 (LVIGTAAVEAGIVSAPMVIIV), and 429 to 449 (MFLASIFGIFGIMLGTIILVL). Residues 489 to 513 (PGTYSRGNGQKGAKREDPKDEENNI) form a disordered region. Positions 501-513 (AKREDPKDEENNI) are enriched in basic and acidic residues.

It belongs to the GerABKA family.

Its subcellular location is the cell membrane. This is an uncharacterized protein from Bacillus subtilis (strain 168).